A 159-amino-acid polypeptide reads, in one-letter code: Phosphopantetheine adenylyltransferase (159 aa).

Thr10 lines the substrate pocket. ATP is bound by residues 10–11 and His18; that span reads TF. Residues Lys42, Met74, and Arg88 each contribute to the substrate site. ATP is bound by residues 89–91, Glu99, and 124–130; these read GLR and WSFISSS.

Belongs to the bacterial CoaD family. Homohexamer. The cofactor is Mg(2+).

The protein localises to the cytoplasm. It catalyses the reaction (R)-4'-phosphopantetheine + ATP + H(+) = 3'-dephospho-CoA + diphosphate. Its pathway is cofactor biosynthesis; coenzyme A biosynthesis; CoA from (R)-pantothenate: step 4/5. In terms of biological role, reversibly transfers an adenylyl group from ATP to 4'-phosphopantetheine, yielding dephospho-CoA (dPCoA) and pyrophosphate. This is Phosphopantetheine adenylyltransferase from Shigella dysenteriae serotype 1 (strain Sd197).